A 1074-amino-acid polypeptide reads, in one-letter code: Probable phospholipid-transporting ATPase tat-5 (1074 aa).

Residues 1 to 26 are disordered; it reads MGKRKKNDESSSSSSQKPCVSSSSDD. Residues 10 to 26 are compositionally biased toward low complexity; the sequence is SSSSSSQKPCVSSSSDD. A run of 4 helical transmembrane segments spans residues 118-138, 143-163, 354-374, and 378-398; these read FVPIVLFQQFKFFLNLYFLLM, FIPAIQIGAPITYWGPLGFVL, LTKLLFCFVLVLSSVMVAMKG, and LWYRYLMRFILLFSYIIPISL. Asp442 functions as the 4-aspartylphosphate intermediate in the catalytic mechanism. ATP is bound by residues Asp442, Lys443, Thr444, Glu524, Phe570, Lys575, Lys594, Arg623, Thr624, Thr704, Gly705, Asp706, Arg786, and Lys792. Position 442 (Asp442) interacts with Mg(2+). Residue Thr444 coordinates Mg(2+). Asp813 provides a ligand contact to Mg(2+). The ATP site is built by Asn816 and Asp817. Position 817 (Asp817) interacts with Mg(2+). The next 5 helical transmembrane spans lie at 886–906, 954–974, 978–998, 1006–1026, and 1038–1058; these read AIFSCVFYFASVSLYQGVLMV, IWVLISLYQGAVIMYGALLVF, FIHVVSISFSALIVTELIMVA, WAMLLAQALSLGLYMISLILF, and WVFISKTTAITAVSCLPLYIV.

This sequence belongs to the cation transport ATPase (P-type) (TC 3.A.3) family. Type IV subfamily. Requires Mg(2+) as cofactor.

The protein localises to the cell membrane. It catalyses the reaction ATP + H2O + phospholipidSide 1 = ADP + phosphate + phospholipidSide 2.. Plays a role in regulating membrane trafficking of cargo proteins during embryogenesis. Regulates snx-3 retromer-mediated endosomal sorting of mig-14, a transporter of Wnt egl-20 morphogen. Together with mon-2 and pad-1, may participate in the formation of endosomal carriers that direct mig-14 trafficking back to Golgi, away from lysosomal degradation. Required for Wnt egl-20 gradient formation along the anteroposterior body axis and migration of QL neuroblast descendants toward the posterior part. Maintains phosphatidylethanolamine (PE) asymmetry at the cell membrane and prevents the budding of ectosome vesicles that affect intercellular communication and morphogenesis. This Caenorhabditis elegans protein is Probable phospholipid-transporting ATPase tat-5 (tat-5).